Consider the following 134-residue polypeptide: Retinol-binding protein 2 (134 aa).

All-trans-retinol is bound by residues Lys-41 and Gln-109.

It belongs to the calycin superfamily. Fatty-acid binding protein (FABP) family. As to expression, higher expression in adult small intestine and to a much lesser extent in fetal kidney.

Its subcellular location is the cytoplasm. Functionally, intracellular transport of retinol. In Homo sapiens (Human), this protein is Retinol-binding protein 2 (RBP2).